The chain runs to 128 residues: MKVHLLKSKIHNAIVTSGDLEYEGSITIDCELLEKADMIPNEKVLVVNNNNGERFETYIINGVRGSRVIQLNGAAARCALPGDEIIIMTFCEIDAEESREFKPMVLIVDRNNNPKRRHRIGEEDEQLD.

The active-site Schiff-base intermediate with substrate; via pyruvic acid is the Ser-25. A Pyruvic acid (Ser) modification is found at Ser-25. Thr-57 provides a ligand contact to substrate. Residue Tyr-58 is the Proton donor of the active site. Residue 73 to 75 (GAA) participates in substrate binding.

Belongs to the PanD family. Heterooctamer of four alpha and four beta subunits. Pyruvate serves as cofactor. Post-translationally, is synthesized initially as an inactive proenzyme, which is activated by self-cleavage at a specific serine bond to produce a beta-subunit with a hydroxyl group at its C-terminus and an alpha-subunit with a pyruvoyl group at its N-terminus.

The protein localises to the cytoplasm. It carries out the reaction L-aspartate + H(+) = beta-alanine + CO2. It functions in the pathway cofactor biosynthesis; (R)-pantothenate biosynthesis; beta-alanine from L-aspartate: step 1/1. Its function is as follows. Catalyzes the pyruvoyl-dependent decarboxylation of aspartate to produce beta-alanine. The polypeptide is Aspartate 1-decarboxylase (Chlorobium luteolum (strain DSM 273 / BCRC 81028 / 2530) (Pelodictyon luteolum)).